Reading from the N-terminus, the 1926-residue chain is Myosin-15 (1926 aa).

The Myosin N-terminal SH3-like domain maps to Asp-29–Pro-79. The Myosin motor domain maps to Glu-83–Asp-770. Lys-127 carries the post-translational modification N6,N6,N6-trimethyllysine. ATP is bound at residue Gly-176–Thr-183. 2 actin-binding regions span residues Leu-647–Val-669 and Arg-749–Gly-763. The IQ domain maps to Leu-773–Ala-802. The stretch at Lys-833 to Glu-1926 forms a coiled coil.

This sequence belongs to the TRAFAC class myosin-kinesin ATPase superfamily. Myosin family. As to quaternary structure, muscle myosin is a hexameric protein that consists of 2 heavy chain subunits (MHC), 2 alkali light chain subunits (MLC) and 2 regulatory light chain subunits (MLC-2).

It is found in the cytoplasm. The protein localises to the myofibril. Its function is as follows. Muscle contraction. The chain is Myosin-15 (MYH15) from Homo sapiens (Human).